The following is a 1100-amino-acid chain: MTLQELVLRTASVYMDRTAVCFDEGNNQPPVCYSYKALLSAASELSHFLIAHCDFGGIREIGLYCQPGINLPSWILGILQVPAAYAPIDPDSPPSLSTYFMKKCDLKYVLVEKQQLSKFKSSHETVLNYDTVSVEHKDLALFRLHWEDGRVSTVLGDRADQHKVTDREDRVSAESRTPEKEHMDMRHDGCLAYVLHTSGTTGTPKIVRVPHACILPNIQHFRSLFDITQEDILFLASPLTFDPSVVEIFVSLSSGACLLIVPTSVKVLPSKLADILFSRHRVTVLQATPTLLRRFGSELIKSTVLSAHTSLRVLALGGEAFPSLTILKSWRGKGNRTQIFNIYGITEVSSWATFYRIPEEILNSAVKHESPVQLGSPLLGTVIEVRDQNGSPVLEGTGQVFLGGKNRVCFLDDEMTVPLGTMRATGDFVTVKDGEIFFLGRKDSQIKRHGKRLNIALVQQVAEELRQVESCAVTWYNQERLILFIVSKVDLVKDCIFKELQKHLPAHALPDDMVLIDTLPFTCHGKVDVSELNKIYLDYISSQPRNELHGKEELWGKLQYLWKSILCLPEDPEDTLKVPANSVFLDSGGDSLKSMRLLSEIERLTGTAIPGLLEVILSSSLLDVYNHIVQAVFTPEDRKANRSYTTKRKFSDADPEEASGKPARLESAWPSNHAGETNSVIALSRGSQVLSLGAGRLLTQLGLCLPVCSLDLIPQTNTQILKSLSPPAPDENLEKPPLFQQGSPVVGAMAMALRERWRSDTGKCVDASPLLVRAAVQDKPSTTVYIGSHSHTVKAVDLSSGETRWEQLLGDRIESSACVSKCGNFIVVGCYNGLVYVLKSNSGEKYWTFTTEDAVKSSPAVDPTTGLIYVGSHDQHAYALDIYEKKCVWKLNCEGALFSSPCVSLSPHHLYCATLGGLLLALNPASGSTVWKRSCGKPLFSSPRCYQQYICIGCVDGSLLCFTHSGEQVWRFAAGGPIFSSPCVSAAEQEIFFGSHDCFIYCCSKEGHLRWKFETTARVYATPFAFSNHPRSDDALLAAASTDGKLWVLESRSGELRSVYELPGEVFSSPVVWESMLVIGCRNNYIYCLDLLCGDKNNQV.

Residues 162 to 181 (HKVTDREDRVSAESRTPEKE) are disordered. ATP is bound by residues 197–205 (TSGTTGTPK), D427, R441, and K526. The Carrier domain maps to 552-632 (EELWGKLQYL…DVYNHIVQAV (81 aa)). S591 carries the O-(pantetheine 4'-phosphoryl)serine modification. The interval 643-671 (SYTTKRKFSDADPEEASGKPARLESAWPS) is disordered. S651 carries the phosphoserine modification.

Belongs to the ATP-dependent AMP-binding enzyme family.

Covalently binds beta-alanine in an ATP-dependent manner to form a thioester bond with its phosphopantetheine group and transfers it to an as yet unknown acceptor via an amide bond. May be required for a post-translational protein modification or for post-transcriptional modification of an RNA. In Mus musculus (Mouse), this protein is Beta-alanine-activating enzyme (Aasdh).